We begin with the raw amino-acid sequence, 244 residues long: Trypsin (244 aa).

Residues 1–15 (MKFLVILVLLGAAVA) form the signal peptide. A propeptide spans 16-21 (FEDDDK) (activation peptide). In terms of domain architecture, Peptidase S1 spans 22–242 (IVGGFTCAKN…FVTWIQSTIS (221 aa)). 6 disulfide bridges follow: C28-C158, C46-C62, C130-C231, C137-C204, C169-C183, and C194-C218. The active-site Charge relay system is the H61. Residues E73, N75, and E83 each coordinate Ca(2+). D105 acts as the Charge relay system in catalysis. The active-site Charge relay system is the S198.

Belongs to the peptidase S1 family. Ca(2+) is required as a cofactor.

The protein resides in the secreted. Its subcellular location is the extracellular space. The enzyme catalyses Preferential cleavage: Arg-|-Xaa, Lys-|-Xaa.. This Xenopus laevis (African clawed frog) protein is Trypsin.